Consider the following 522-residue polypeptide: Cytochrome P450 9c1 (522 aa).

Residue Cys464 coordinates heme.

This sequence belongs to the cytochrome P450 family. Heme serves as cofactor.

Its subcellular location is the endoplasmic reticulum membrane. The protein localises to the microsome membrane. Functionally, may be involved in the metabolism of insect hormones and in the breakdown of synthetic insecticides. The sequence is that of Cytochrome P450 9c1 (Cyp9c1) from Drosophila melanogaster (Fruit fly).